The following is a 448-amino-acid chain: UDP-N-acetylmuramoylalanine--D-glutamate ligase (448 aa).

Positions 17, 18, 38, 39, and 78 each coordinate UDP-N-acetyl-alpha-D-muramoyl-L-alanine. Position 116–122 (116–122 (GSNAKST)) interacts with ATP. Residues A119, K120, S121, and T122 each contribute to the ADP site. UDP-N-acetyl-alpha-D-muramoyl-L-alanine is bound by residues N143 and H188. ADP-binding residues include N278, R309, D324, and K326.

The protein belongs to the MurCDEF family.

The protein localises to the cytoplasm. It catalyses the reaction UDP-N-acetyl-alpha-D-muramoyl-L-alanine + D-glutamate + ATP = UDP-N-acetyl-alpha-D-muramoyl-L-alanyl-D-glutamate + ADP + phosphate + H(+). It participates in cell wall biogenesis; peptidoglycan biosynthesis. In terms of biological role, involved in cell wall formation. Catalyzes the addition of D-glutamate to the peptidoglycan precursor UDP-N-acetylmuramoyl-L-alanine (UMA). The sequence is that of UDP-N-acetylmuramoylalanine--D-glutamate ligase from Pseudomonas aeruginosa (strain ATCC 15692 / DSM 22644 / CIP 104116 / JCM 14847 / LMG 12228 / 1C / PRS 101 / PAO1).